A 617-amino-acid chain; its full sequence is D-glucuronyl C5-epimerase (617 aa).

Over Met1 to Lys11 the chain is Cytoplasmic. A helical; Signal-anchor for type II membrane protein transmembrane segment spans residues Thr12–Trp28. Topologically, residues Asn29 to Asn617 are lumenal. Substrate is bound by residues Tyr179, Arg184–Arg186, Gln201, Tyr209, Gln212, and Gln215. 5 residues coordinate Ca(2+): Thr237, Glu239, Thr268, Asn269, and Asp392. Substrate contacts are provided by residues Lys429–Glu432, Glu499–Tyr500, Asn510, Tyr514, Tyr560, Arg563, and Asn572–Thr581.

It belongs to the D-glucuronyl C5-epimerase family. In terms of assembly, homodimer. Interacts with HS2ST1.

Its subcellular location is the golgi apparatus membrane. The catalysed reaction is [heparosan-N-sulfate](n) = [heparan-N-sulfate](n). The protein operates within glycan metabolism; heparan sulfate biosynthesis. It functions in the pathway glycan metabolism; heparin biosynthesis. Functionally, converts D-glucuronic acid residues adjacent to N-sulfate sugar residues to L-iduronic acid residues, both in maturing heparan sulfate (HS) and heparin chains. This is important for further modifications that determine the specificity of interactions between these glycosaminoglycans and proteins. The sequence is that of D-glucuronyl C5-epimerase (GLCE) from Bos taurus (Bovine).